Here is a 505-residue protein sequence, read N- to C-terminus: Dolichyl pyrophosphate Glc1Man9GlcNAc2 alpha-1,3-glucosyltransferase (505 aa).

At 1-3 the chain is on the lumenal side; the sequence is MAE. Residues 4–24 traverse the membrane as a helical segment; the sequence is IYPSLVQCAIVATAFKVLLFP. Topologically, residues 25 to 101 are cytoplasmic; that stretch reads AYKSTDFEVH…DSWQTVYFQR (77 aa). Residues 102-122 traverse the membrane as a helical segment; the sequence is WTVIVTELVLLYALQMFVDST. Residues 123 to 128 are Lumenal-facing; sequence PGVSKR. The chain crosses the membrane as a helical span at residues 129-149; it reads AAHAAAVSILLSPGLLIIDHI. Over 150 to 152 the chain is Cytoplasmic; that stretch reads HFQ. A helical transmembrane segment spans residues 153-169; that stretch reads YNGVMYGILIASLVLAK. The Lumenal portion of the chain corresponds to 170 to 173; sequence KKSS. The helical transmembrane segment at 174–194 threads the bilayer; it reads LLASGLVFAALLCMKHIYLYL. Over 195–224 the chain is Cytoplasmic; sequence APAYFVYLLRVYCLPPKLSPRSIFRIQFFN. A helical membrane pass occupies residues 225 to 245; sequence CVKLGGGIAAIFAAAFGPFAL. Residues 246-319 lie on the Lumenal side of the membrane; sequence KNQIPQIFSR…TSFAVLPDIT (74 aa). A helical membrane pass occupies residues 320 to 340; it reads PRMCFVLTLLFQAIPLIKLFM. Over 341-359 the chain is Cytoplasmic; the sequence is RPTWEGFIGGVTLCGYASF. A helical membrane pass occupies residues 360–380; it reads LFGWHVHEKAILLVIIPFSLI. Topologically, residues 381 to 386 are lumenal; sequence ALKDRR. The chain crosses the membrane as a helical span at residues 387-407; it reads YLGAFRPLAVAGHVSLFPLIF. The Cytoplasmic segment spans residues 408-409; the sequence is TP. The chain crosses the membrane as a helical span at residues 410–430; that stretch reads AEFPIKTVYTIFWLVLFLMAF. At 431–450 the chain is on the lumenal side; it reads DRLAPAPTRQRLFLFDRFST. The helical transmembrane segment at 451–471 threads the bilayer; it reads AYITVSIPLIFYCSLMHGIIF. Topologically, residues 472 to 480 are cytoplasmic; it reads GKSYEFLPL. Residues 481–501 form a helical membrane-spanning segment; it reads MFTSSYSAIGVVGSWLGFMVV. Over 502–505 the chain is Lumenal; that stretch reads YFTE.

This sequence belongs to the ALG6/ALG8 glucosyltransferase family.

It localises to the endoplasmic reticulum membrane. The enzyme catalyses an alpha-D-Glc-(1-&gt;3)-alpha-D-Man-(1-&gt;2)-alpha-D-Man-(1-&gt;2)-alpha-D-Man-(1-&gt;3)-[alpha-D-Man-(1-&gt;2)-alpha-D-Man-(1-&gt;3)-[alpha-D-Man-(1-&gt;2)-alpha-D-Man-(1-&gt;6)]-alpha-D-Man-(1-&gt;6)]-beta-D-Man-(1-&gt;4)-beta-D-GlcNAc-(1-&gt;4)-alpha-D-GlcNAc-diphospho-di-trans,poly-cis-dolichol + a di-trans,poly-cis-dolichyl beta-D-glucosyl phosphate = an alpha-D-Glc-(1-&gt;3)-alpha-D-Glc-(1-&gt;3)-alpha-D-Man-(1-&gt;2)-alpha-D-Man-(1-&gt;2)-alpha-D-Man-(1-&gt;3)-[alpha-D-Man-(1-&gt;2)-alpha-D-Man-(1-&gt;3)-[alpha-D-Man-(1-&gt;2)-alpha-D-Man-(1-&gt;6)]-alpha-D-Man-(1-&gt;6)]-beta-D-Man-(1-&gt;4)-beta-D-GlcNAc-(1-&gt;4)-alpha-D-GlcNAc-diphospho-di-trans,poly-cis-dolichol + a di-trans,poly-cis-dolichyl phosphate + H(+). The protein operates within protein modification; protein glycosylation. Its function is as follows. Dolichyl pyrophosphate Glc1Man9GlcNAc2 alpha-1,3-glucosyltransferase that operates in the biosynthetic pathway of dolichol-linked oligosaccharides, the glycan precursors employed in protein asparagine (N)-glycosylation. The assembly of dolichol-linked oligosaccharides begins on the cytosolic side of the endoplasmic reticulum membrane and finishes in its lumen. The sequential addition of sugars to dolichol pyrophosphate produces dolichol-linked oligosaccharides containing fourteen sugars, including two GlcNAcs, nine mannoses and three glucoses. Once assembled, the oligosaccharide is transferred from the lipid to nascent proteins by oligosaccharyltransferases. In the lumen of the endoplasmic reticulum, adds the second glucose residue from dolichyl phosphate glucose (Dol-P-Glc) onto the lipid-linked oligosaccharide intermediate Glc(1)Man(9)GlcNAc(2)-PP-Dol to produce Glc(2)Man(9)GlcNAc(2)-PP-Dol. The chain is Dolichyl pyrophosphate Glc1Man9GlcNAc2 alpha-1,3-glucosyltransferase (alg-8) from Neurospora crassa (strain ATCC 24698 / 74-OR23-1A / CBS 708.71 / DSM 1257 / FGSC 987).